The primary structure comprises 338 residues: Taste receptor type 2 member 39 (338 aa).

The Extracellular portion of the chain corresponds to 1–30; it reads MLGRCFPPDTKEKQQLRMTKLCDPAESELS. A helical membrane pass occupies residues 31–51; it reads PFLITLILAVLLAEYLIGIIA. At 52–74 the chain is on the cytoplasmic side; that stretch reads NGFIMAIHAAEWVQNKAVSTSGR. A helical membrane pass occupies residues 75 to 95; it reads ILVFLSVSRIALQSLMMLEIT. Residues 96–116 are Extracellular-facing; sequence ISSTSLSFYSEDAVYYAFKIS. A helical transmembrane segment spans residues 117 to 137; the sequence is FIFLNFCSLWFAAWLSFFYFV. Residues 138 to 156 lie on the Cytoplasmic side of the membrane; it reads KIANFSYPLFLKLRWRITG. The helical transmembrane segment at 157 to 177 threads the bilayer; that stretch reads LIPWLLWLSVFISFSHSMFCI. Over 178–205 the chain is Extracellular; the sequence is NIXTVYCNNSFPIHSSNSTKKTYLSEIN. Asn-185 and Asn-194 each carry an N-linked (GlcNAc...) asparagine glycan. The chain crosses the membrane as a helical span at residues 206–226; that stretch reads VVGLAFFFNLGIVTPLIMFIL. Residues 227-262 are Cytoplasmic-facing; sequence TATLLILSLKRHTLHMGSNATGSNDPSMEAHMGAIK. A helical membrane pass occupies residues 263–283; that stretch reads ATSYFLILYIFNAVALFIYLS. Over 284–291 the chain is Extracellular; it reads NMFDINSL. A helical transmembrane segment spans residues 292–312; it reads WNNLCQIIMAAYPASHSILLI. Residues 313 to 338 lie on the Cytoplasmic side of the membrane; sequence QDNPGLRRAWKRLQLRLHLYPKEWTL.

Belongs to the G-protein coupled receptor T2R family.

The protein resides in the membrane. In terms of biological role, receptor that may play a role in the perception of bitterness and is gustducin-linked. May play a role in sensing the chemical composition of the gastrointestinal content. The activity of this receptor may stimulate alpha gustducin, mediate PLC-beta-2 activation and lead to the gating of TRPM5. The sequence is that of Taste receptor type 2 member 39 (TAS2R39) from Gorilla gorilla gorilla (Western lowland gorilla).